The chain runs to 449 residues: N-succinylarginine dihydrolase (449 aa).

Substrate contacts are provided by residues glycine 19–serine 28, asparagine 110, and histidine 137–arginine 138. Positions tyrosine 23–arginine 43 are disordered. The segment covering asparagine 25–asparagine 37 has biased composition (polar residues). The active site involves glutamate 174. Arginine 214 lines the substrate pocket. Residue histidine 250 is part of the active site. Substrate contacts are provided by aspartate 252 and asparagine 365. Residue cysteine 371 is the Nucleophile of the active site.

This sequence belongs to the succinylarginine dihydrolase family. Homodimer.

It catalyses the reaction N(2)-succinyl-L-arginine + 2 H2O + 2 H(+) = N(2)-succinyl-L-ornithine + 2 NH4(+) + CO2. It functions in the pathway amino-acid degradation; L-arginine degradation via AST pathway; L-glutamate and succinate from L-arginine: step 2/5. In terms of biological role, catalyzes the hydrolysis of N(2)-succinylarginine into N(2)-succinylornithine, ammonia and CO(2). In Pseudomonas putida (strain GB-1), this protein is N-succinylarginine dihydrolase.